Reading from the N-terminus, the 439-residue chain is ATP-dependent protease ATPase subunit HslU (439 aa).

ATP-binding positions include Ile-17, 59-64, Asp-251, Glu-317, and Arg-389; that span reads GVGKTE.

This sequence belongs to the ClpX chaperone family. HslU subfamily. In terms of assembly, a double ring-shaped homohexamer of HslV is capped on each side by a ring-shaped HslU homohexamer. The assembly of the HslU/HslV complex is dependent on binding of ATP.

It is found in the cytoplasm. Its function is as follows. ATPase subunit of a proteasome-like degradation complex; this subunit has chaperone activity. The binding of ATP and its subsequent hydrolysis by HslU are essential for unfolding of protein substrates subsequently hydrolyzed by HslV. HslU recognizes the N-terminal part of its protein substrates and unfolds these before they are guided to HslV for hydrolysis. This Campylobacter jejuni subsp. doylei (strain ATCC BAA-1458 / RM4099 / 269.97) protein is ATP-dependent protease ATPase subunit HslU.